Reading from the N-terminus, the 270-residue chain is Putative phosphoenolpyruvate synthase regulatory protein (270 aa).

G150–T157 contributes to the ADP binding site.

Belongs to the pyruvate, phosphate/water dikinase regulatory protein family. PSRP subfamily.

The enzyme catalyses [pyruvate, water dikinase] + ADP = [pyruvate, water dikinase]-phosphate + AMP + H(+). It catalyses the reaction [pyruvate, water dikinase]-phosphate + phosphate + H(+) = [pyruvate, water dikinase] + diphosphate. Functionally, bifunctional serine/threonine kinase and phosphorylase involved in the regulation of the phosphoenolpyruvate synthase (PEPS) by catalyzing its phosphorylation/dephosphorylation. The protein is Putative phosphoenolpyruvate synthase regulatory protein of Shewanella loihica (strain ATCC BAA-1088 / PV-4).